We begin with the raw amino-acid sequence, 685 residues long: Twinkle mtDNA helicase (685 aa).

The N-terminal 31 residues, 1 to 31 (MWLLLRRAYPLRILLPLRGEWVGRRGLPRSL), are a transit peptide targeting the mitochondrion. The contributes to single strand DNA binding activity stretch occupies residues 1 to 122 (MWLLLRRAYP…LCMTSLAEGS (122 aa)). The segment at 54-214 (PVTTTEIRQY…LVFPWFTPGS (161 aa)) is N-terminal region (NTR). The required for hexamers formation and DNA helicase activity stretch occupies residues 122 to 373 (SWEDLQASVE…WHKSIVSFRQ (252 aa)). The primase-like domain stretch occupies residues 215 to 335 (SGLRGLKLLG…LNPKRCSLVR (121 aa)). The SF4 helicase domain maps to 385-636 (VEQAAGVRWS…LTFSIPPKSK (252 aa)). Residues 406–591 (HRKGELTVFT…QEADNVLILQ (186 aa)) are maybe required for stable oligomeric structure. 416–423 (GPTGSGKT) lines the ATP pocket. Residues 454–482 (RVMLTQFAVTRLEEQLDKYEEWADRFEDL) adopt a coiled-coil conformation. The segment at 641–685 (KIKDDNGLVAKKSSSGKKGAAHQNPEICLGQDPSPAQPDTSKSSG) is might negatively regulate ATPase activity. Residues 642–685 (IKDDNGLVAKKSSSGKKGAAHQNPEICLGQDPSPAQPDTSKSSG) are disordered.

In terms of assembly, homohexamer (via C-terminus), which assembles in a ring-like structure. Homoheptamer, which assembles in a ring-like structure. Homooctamer, which assembles in a ring-like structure. Oligomers may sequentially eject two monomers (octamer&gt;heptamer&gt;hexamer) upon DNA binding. Oligomerization is Mg(2+), nucleotide and DNA-independent, however, Mg(2+) and nucleotide stabilize the homohexameric form. Interacts with POLG in vitro. Interacts with LONP1. In terms of tissue distribution, ubiquitous with the highest levels in the liver, heart and kidneys. The skeletal muscle, brain and testis showed lower but detectable expression. Expression is coregulated with MRPL43.

Its subcellular location is the mitochondrion matrix. It localises to the mitochondrion nucleoid. The protein resides in the mitochondrion inner membrane. It catalyses the reaction ATP + H2O = ADP + phosphate + H(+). It carries out the reaction Couples ATP hydrolysis with the unwinding of duplex DNA at the replication fork by translocating in the 5'-3' direction. This creates two antiparallel DNA single strands (ssDNA). The leading ssDNA polymer is the template for DNA polymerase III holoenzyme which synthesizes a continuous strand.. Mitochondrial helicase involved in mtDNA replication and repair. Might have a role in mtDNA repair. Has DNA strand separation activity needed to form a processive replication fork for leading strand synthesis which is catalyzed by the formation of a replisome complex with POLG and mtSDB. Preferentially unwinds DNA substrates with pre-existing 5'-and 3'- single-stranded tails but is also active on a 5'- flap substrate. Can dissociate the invading strand of immobile or mobile D-loop DNA structures irrespective of the single strand polarity of the third strand. In addition to its DNA strand separation activity, also has DNA strand annealing, DNA strand-exchange and DNA branch migration activities. The chain is Twinkle mtDNA helicase from Mus musculus (Mouse).